The following is a 232-amino-acid chain: Somatolactin (232 aa).

The N-terminal stretch at 1-16 is a signal peptide; that stretch reads MHNWKGVWLCSLFLTF. 3 cysteine pairs are disulfide-bonded: C31–C41, C91–C206, and C223–C231. N147 is a glycosylation site (N-linked (GlcNAc...) asparagine).

The protein belongs to the somatotropin/prolactin family. Pituitary gland.

The protein localises to the secreted. The chain is Somatolactin from Protopterus annectens (African lungfish).